The following is a 157-amino-acid chain: Parasitophorous vacuole membrane protein S16 (157 aa).

A signal peptide spans 1–25; the sequence is MNIRKFIPSLALMLIFFAFANLVLS. Residues 26-105 are Extracellular-facing; the sequence is DANDKAKKPA…DKKTTVNRNL (80 aa). A disordered region spans residues 30–74; the sequence is KAKKPAGKGSPSTLQTPGSSSGASLHAVGPNQGGLSQGLSGKDSA. Polar residues predominate over residues 39–52; the sequence is SPSTLQTPGSSSGA. The helical transmembrane segment at 106–126 threads the bilayer; the sequence is IISTAVTNMIMLIILSGIVGF. Topologically, residues 127-157 are cytoplasmic; that stretch reads KVKKTKNADDDKGDKDKDKDNTDEGDEGDDS. The tract at residues 130 to 157 is disordered; that stretch reads KTKNADDDKGDKDKDKDNTDEGDEGDDS. Positions 132–148 are enriched in basic and acidic residues; the sequence is KNADDDKGDKDKDKDNT.

The protein localises to the parasitophorous vacuole membrane. It is found in the vacuole. Functionally, involved in male gametogenesis. Required for exflagellation of male gametocytes. May play a role in parasite transmission in the mosquito. Binds to the mosquito vector midgut. The protein is Parasitophorous vacuole membrane protein S16 of Plasmodium falciparum (isolate 3D7).